The sequence spans 79 residues: D-alanyl carrier protein (79 aa).

Residues 1-77 form the Carrier domain; it reads MSIEETVIEL…KIVQGVEELQ (77 aa). S35 is subject to O-(pantetheine 4'-phosphoryl)serine.

This sequence belongs to the DltC family. Post-translationally, 4'-phosphopantetheine is transferred from CoA to a specific serine of apo-DCP.

The protein localises to the cytoplasm. The protein operates within cell wall biogenesis; lipoteichoic acid biosynthesis. Functionally, carrier protein involved in the D-alanylation of lipoteichoic acid (LTA). The loading of thioester-linked D-alanine onto DltC is catalyzed by D-alanine--D-alanyl carrier protein ligase DltA. The DltC-carried D-alanyl group is further transferred to cell membrane phosphatidylglycerol (PG) by forming an ester bond, probably catalyzed by DltD. D-alanylation of LTA plays an important role in modulating the properties of the cell wall in Gram-positive bacteria, influencing the net charge of the cell wall. The polypeptide is D-alanyl carrier protein (Streptococcus pyogenes serotype M1).